A 302-amino-acid chain; its full sequence is uncharacterized protein (302 aa).

Transmembrane regions (helical) follow at residues 10–30, 65–85, 102–122, 130–150, 162–182, 190–210, 224–244, 251–271, and 282–302; these read VLSV…GVLG, LVLI…IAYL, VAAA…GIFG, IFYD…LSHI, AVFF…LWGL, ILGY…GLTL, LVSG…SYVL, FSVT…VLAI, and SCIF…SVVL.

The protein belongs to the auxin efflux carrier (TC 2.A.69) family.

The protein resides in the cell membrane. This is an uncharacterized protein from Methanothermobacter thermautotrophicus (strain ATCC 29096 / DSM 1053 / JCM 10044 / NBRC 100330 / Delta H) (Methanobacterium thermoautotrophicum).